Reading from the N-terminus, the 106-residue chain is Nucleoid-associated protein RPD_0086 (106 aa).

Belongs to the YbaB/EbfC family. As to quaternary structure, homodimer.

The protein resides in the cytoplasm. Its subcellular location is the nucleoid. Its function is as follows. Binds to DNA and alters its conformation. May be involved in regulation of gene expression, nucleoid organization and DNA protection. This Rhodopseudomonas palustris (strain BisB5) protein is Nucleoid-associated protein RPD_0086.